We begin with the raw amino-acid sequence, 571 residues long: L-erythrulose 1-kinase (571 aa).

The DhaK domain maps to 7–331 (SPDDFADEAV…WTAPVETPAY (325 aa)). Histidine 217 serves as the catalytic Tele-hemiaminal-histidine intermediate. One can recognise a DhaL domain in the interval 367-567 (RNIVAVLETF…FAMLMKALGE (201 aa)). ATP is bound by residues 396–402 (DGDHGQG), 442–443 (TS), glycine 484, arginine 539, and 552–554 (DPG).

It catalyses the reaction L-erythrulose + ATP = L-erythrulose 1-phosphate + ADP + H(+). It participates in carbohydrate metabolism; L-threitol degradation. In terms of biological role, kinase that has a preference for L-erythrulose, producing L-erythrulose-1P. Involved in the degradation pathway of L-threitol, that allows M.smegmatis to grow on this compound as the sole carbon source. Is also able to phosphorylate D-erythrulose and dihydroxyacetone in vitro. This chain is L-erythrulose 1-kinase, found in Mycolicibacterium smegmatis (strain ATCC 700084 / mc(2)155) (Mycobacterium smegmatis).